The chain runs to 910 residues: Inactive disease susceptibility protein LOV1 (910 aa).

The stretch at 22-60 (ARLNGIGEQVDGLKRQLGRLQSLLKDADAKKHESERVRN) forms a coiled coil. The NB-ARC domain maps to 169–461 (EQSVEALAGH…AAEGIITSSD (293 aa)). 3 LRR repeats span residues 584 to 609 (LPLL…IGDL), 610 to 632 (IHLR…LRNL), and 634 to 655 (LLLY…LKEM).

The protein belongs to the disease resistance NB-LRR family. RPP8/HRT subfamily.

This chain is Inactive disease susceptibility protein LOV1 (LOV1), found in Arabidopsis thaliana (Mouse-ear cress).